Here is a 396-residue protein sequence, read N- to C-terminus: Putative nickel insertion protein (396 aa).

The protein belongs to the LarC family.

The chain is Putative nickel insertion protein from Methanosarcina mazei (strain ATCC BAA-159 / DSM 3647 / Goe1 / Go1 / JCM 11833 / OCM 88) (Methanosarcina frisia).